A 314-amino-acid polypeptide reads, in one-letter code: Melanocyte-stimulating hormone receptor (314 aa).

Topologically, residues 1 to 35 (MSMLAPLRLVREPWNASEGNQSNATAGAGGAWCQG) are extracellular. N-linked (GlcNAc...) asparagine glycans are attached at residues N15, N20, and N23. A helical membrane pass occupies residues 36–61 (LDIPNELFLTLGLVSLVENLLVVAAI). Over 62–70 (LKNRNLHSP) the chain is Cytoplasmic. The helical transmembrane segment at 71 to 91 (TYYFICCLAVSDMLVSVSNLA) threads the bilayer. The Extracellular portion of the chain corresponds to 92–116 (KTLFMLLMEHGVLVIRASIVRHMDN). Residues 117–138 (VIDMLICSSVVSSLSFLGVIAV) form a helical membrane-spanning segment. The Cytoplasmic segment spans residues 139–161 (DRYITIFYALRYHSIMTLQRAVV). The helical transmembrane segment at 162-181 (TMASVWLASTVSSTVLITYY) threads the bilayer. Residues 182–189 (RNNAILLC) lie on the Extracellular side of the membrane. A helical membrane pass occupies residues 190–209 (LIGFFLFMLVLMLVLYIHMF). At 210–237 (ALACHHVRSISSQQKQPTIYRTSSLKGA) the chain is on the cytoplasmic side. Residues 238–263 (VTLTILLGVFFICWGPFFFHLILIVT) traverse the membrane as a helical segment. Residues 264-276 (CPTNPFCTCFFSY) lie on the Extracellular side of the membrane. The helical transmembrane segment at 277-297 (FNLFLILIICNSVVDPLIYAF) threads the bilayer. Topologically, residues 298–314 (RSQELRRTLREVVLCSW) are cytoplasmic. C312 carries S-palmitoyl cysteine lipidation.

The protein belongs to the G-protein coupled receptor 1 family.

It localises to the cell membrane. Receptor for MSH (alpha, beta and gamma) and ACTH. The activity of this receptor is mediated by G proteins which activate adenylate cyclase. Mediates melanogenesis via regulation of cAMP signaling in melanocytes. This Gallus gallus (Chicken) protein is Melanocyte-stimulating hormone receptor (MC1R).